Consider the following 101-residue polypeptide: Trp operon repressor homolog (101 aa).

A DNA-binding region spans residues 59–82 (QREIQQNLSTSAATITRGSNMLKM).

This sequence belongs to the TrpR family. As to quaternary structure, homodimer.

The protein localises to the cytoplasm. Its function is as follows. This protein is an aporepressor. When complexed with L-tryptophan it binds the operator region of the trp operon and prevents the initiation of transcription. The protein is Trp operon repressor homolog of Actinobacillus succinogenes (strain ATCC 55618 / DSM 22257 / CCUG 43843 / 130Z).